The chain runs to 7570 residues: Dystonin (7570 aa).

2 Calponin-homology (CH) domains span residues 35–138 and 151–255; these read KVQK…LHFQ and MSAK…DAFP. Residues 35-252 are actin-binding; it reads KVQKKTFTKW…VITYVSSLYD (218 aa). Residues leucine 135, lysine 184, serine 236, and serine 237 each carry the phosphoserine modification. Spectrin repeat units follow at residues 602–699 and 701–802; these read EINM…RHLD and LHNF…QHIK. Positions 887 to 944 constitute an SH3 domain; that stretch reads KTSIPIKAICDYRQIEITIYKDDECVLANNSHRAKWKVISPTGNEAMVPSVCFTVPPP. Spectrin repeat units lie at residues 1293 to 1422 and 1440 to 1540; these read KYYR…KFAG and KEHV…QESQ. Serine 1382 is modified (phosphoserine). A Nuclear localization signal; in isoform 6 motif is present at residues 1383–1389; sequence PVKRRRM. Glutamate 1565 is subject to Phosphoserine. 5 Plectin repeats span residues 1584 to 1626, 1660 to 1703, 1774 to 1817, 1818 to 1855, and 1856 to 1891; these read IRLL…QLKE, KVLE…LERQ, RLLS…LTYQ, VQTG…LEAQ, and RGYV…KILN. Serine 2229 is subject to Phosphoserine. Disordered stretches follow at residues 2317 to 2346, 2383 to 2441, and 2585 to 2616; these read SNTS…IEEY, LLND…DETA, and DYIY…GKPR. Residues 2336–2345 show a composition bias toward acidic residues; it reads DKEDESEIEE. Residues 2385–2394 are compositionally biased toward low complexity; that stretch reads NDQQNNTGTD. 3 stretches are compositionally biased toward acidic residues: residues 2395-2412, 2430-2439, and 2591-2605; these read TDSD…DDDH, YDTLQEENDE, and NDQD…DEEG. Serine 2919 is modified (phosphoserine). The disordered stretch occupies residues 3190-3221; it reads EASTVPSDSQMSDSSGVSPMTNSSELKPESRD. A compositionally biased stretch (low complexity) spans 3192–3209; it reads STVPSDSQMSDSSGVSPM. Spectrin repeat units follow at residues 3395–3501, 3643–3752, 3926–4040, 4047–4153, 4160–4259, 4269–4368, 4516–4621, 4628–4732, 4742–4842, 4849–4951, 4958–5058, 5068–5167, 5174–5277, 5284–5388, 5395–5497, 5504–5715, 5831–5933, 5941–6041, 6048–6154, 6161–6263, 6270–6373, 6380–6482, 6489–6591, 6598–6700, 6707–6810, 6817–6918, 6925–7027, and 7037–7167; these read LQHT…KQIM, QEYK…KELD, EKFD…NNLK, QHYE…EKLQ, LSVQ…ETLA, ELFE…EAVT, QKAQ…QKLE, TQFQ…DWID, QSLL…QHLQ, HQFQ…NKLK, LKYK…FCLE, QEVS…SFLE, GHFQ…EQVE, EEFY…AQLQ, GRFQ…RQLE, QQFH…KTLE, QQFD…LQLE, QFWE…VALD, TQFH…AKLL, EKFW…DKLE, VQYQ…HKLE, GQFQ…QQLD, KGFH…TKLE, MEFH…RSLD, KQFH…NKLE, GQFT…TRLE, EEFH…QRLA, and QELL…RKLN. Residue serine 3968 is modified to Phosphoserine. Residue serine 4749 is modified to Phosphoserine. Lysine 5470 is covalently cross-linked (Glycyl lysine isopeptide (Lys-Gly) (interchain with G-Cter in ubiquitin)). EF-hand domains are found at residues 7197 to 7232 and 7233 to 7268; these read HKKS…SKFP and TSRL…NKDA. The Ca(2+) site is built by aspartate 7210, aspartate 7212, aspartate 7214, lysine 7216, glutamate 7221, aspartate 7246, aspartate 7248, aspartate 7250, tyrosine 7252, and glutamate 7257. A GAR domain is found at 7273–7351; sequence TDADKIEDEV…EFLVKNDPCR (79 aa). Disordered stretches follow at residues 7358–7379, 7395–7452, and 7481–7570; these read KMLR…AKGR, SQGM…SKLR, and QFAD…SSKR. Over residues 7362 to 7374 the composition is skewed to polar residues; that stretch reads SESNSSITTTQPT. Low complexity-rich tracts occupy residues 7411-7441 and 7490-7504; these read SSRG…TTTP and SRPG…GSRA. Phosphoserine is present on serine 7432. Residues serine 7510, serine 7513, and serine 7525 each carry the phosphoserine modification. Polar residues predominate over residues 7519–7535; sequence EIQSVCSDVETVPQTHR. Positions 7550–7553 match the Microtubule tip localization signal motif; that stretch reads SKIP.

Homodimer. Isoform 1 interacts (via N-terminus) with PLEC (via N-terminus). Interacts with the neuronal intermediate filament protein, PRPH. Interacts with DES. Interacts with SYNE3. Isoform 1 and isoform 6 can homodimerize (via N-terminus). Isoform 1 interacts (via N-terminus) with ACTN2. Isoform 1 interacts (via N-terminus) with PLEC (via N-terminus). Isoform 3 interacts (via N-terminus) with COL17A1 (via cytoplasmic region). Isoform 3 interacts (via N-terminus) with ITGB4 isoform beta-4a (via cytoplasmic region). Isoform 3 interacts (via N-terminus) with ERBIN (via C-terminus). Isoform 3 associates (via C-terminal) with KRT5-KRT14 (via rod region) intermediate filaments of keratins. Interacts with MAPRE1; probably required for targeting to the growing microtubule plus ends. Interacts with TMIGD2. Isoform 9 interacts with TMEM108. Isoform 1 is expressed in myoblasts (at protein level). Isoform 3 is expressed in the skin. Isoform 6 is expressed in the brain. Highly expressed in skeletal muscle and cultured keratinocytes.

The protein localises to the cytoplasm. It localises to the cytoskeleton. It is found in the stress fiber. Its subcellular location is the cell projection. The protein resides in the axon. The protein localises to the myofibril. It localises to the sarcomere. It is found in the z line. Its subcellular location is the h zone. The protein resides in the cell junction. The protein localises to the hemidesmosome. It localises to the nucleus. It is found in the nucleus envelope. Its subcellular location is the membrane. The protein resides in the endoplasmic reticulum membrane. The protein localises to the cell cortex. It localises to the cell membrane. Cytoskeletal linker protein. Acts as an integrator of intermediate filaments, actin and microtubule cytoskeleton networks. Required for anchoring either intermediate filaments to the actin cytoskeleton in neural and muscle cells or keratin-containing intermediate filaments to hemidesmosomes in epithelial cells. The proteins may self-aggregate to form filaments or a two-dimensional mesh. Regulates the organization and stability of the microtubule network of sensory neurons to allow axonal transport. Mediates docking of the dynein/dynactin motor complex to vesicle cargos for retrograde axonal transport through its interaction with TMEM108 and DCTN1. Functionally, plays a structural role in the assembly of hemidesmosomes of epithelial cells; anchors keratin-containing intermediate filaments to the inner plaque of hemidesmosomes. Required for the regulation of keratinocyte polarity and motility; mediates integrin ITGB4 regulation of RAC1 activity. In terms of biological role, required for bundling actin filaments around the nucleus. Its function is as follows. Regulates the organization and stability of the microtubule network of sensory neurons to allow axonal transport. The polypeptide is Dystonin (Homo sapiens (Human)).